A 542-amino-acid chain; its full sequence is Esterase 6 (542 aa).

The first 19 residues, 1-19 (MNYVGLIIVLSCLWLGSNA), serve as a signal peptide directing secretion. The N-linked (GlcNAc...) asparagine glycan is linked to Asn40. A disulfide bond links Cys84 and Cys103. Catalysis depends on Ser207, which acts as the Acyl-ester intermediate. Residues Cys259 and Cys271 are joined by a disulfide bond. Asn418 and Asn454 each carry an N-linked (GlcNAc...) asparagine glycan. His464 (charge relay system) is an active-site residue. Residues Cys512 and Cys533 are joined by a disulfide bond.

The protein belongs to the type-B carboxylesterase/lipase family. In terms of assembly, monomer.

It localises to the secreted. The catalysed reaction is a carboxylic ester + H2O = an alcohol + a carboxylate + H(+). Its function is as follows. Transferred from the ejaculatory bulbs of males to the female genitals upon copulation, plays an important role in the reproductive biology. The sequence is that of Esterase 6 (Est-6) from Drosophila simulans (Fruit fly).